Consider the following 238-residue polypeptide: Large ribosomal subunit protein uL1 (238 aa).

This sequence belongs to the universal ribosomal protein uL1 family. In terms of assembly, part of the 50S ribosomal subunit.

In terms of biological role, binds directly to 23S rRNA. The L1 stalk is quite mobile in the ribosome, and is involved in E site tRNA release. Its function is as follows. Protein L1 is also a translational repressor protein, it controls the translation of the L11 operon by binding to its mRNA. The polypeptide is Large ribosomal subunit protein uL1 (Frankia casuarinae (strain DSM 45818 / CECT 9043 / HFP020203 / CcI3)).